Consider the following 119-residue polypeptide: Large ribosomal subunit protein uL18 (119 aa).

Belongs to the universal ribosomal protein uL18 family. Part of the 50S ribosomal subunit; part of the 5S rRNA/L5/L18/L25 subcomplex. Contacts the 5S and 23S rRNAs.

Its function is as follows. This is one of the proteins that bind and probably mediate the attachment of the 5S RNA into the large ribosomal subunit, where it forms part of the central protuberance. This chain is Large ribosomal subunit protein uL18, found in Chelativorans sp. (strain BNC1).